An 89-amino-acid chain; its full sequence is Bombyxin B-2 (89 aa).

Positions methionine 1–serine 19 are cleaved as a signal peptide. 3 disulfide bridges follow: cysteine 29-cysteine 75, cysteine 41-cysteine 88, and cysteine 74-cysteine 79. The propeptide at serine 48–glycine 66 is c peptide like.

This sequence belongs to the insulin family. As to quaternary structure, heterodimer of a B chain and an A chain linked by two disulfide bonds.

The protein localises to the secreted. Brain peptide responsible for activation of prothoracic glands to produce ecdysone in insects. The polypeptide is Bombyxin B-2 (BBXB2) (Bombyx mori (Silk moth)).